The sequence spans 96 residues: Large ribosomal subunit protein bL28 (96 aa).

The segment at 1–22 is disordered; the sequence is MSRRCELTGKGPMTGNNVSHAN.

It belongs to the bacterial ribosomal protein bL28 family.

The sequence is that of Large ribosomal subunit protein bL28 from Ruegeria sp. (strain TM1040) (Silicibacter sp.).